Consider the following 487-residue polypeptide: Serine/threonine-protein kinase 4 (487 aa).

Met-1 carries the post-translational modification N-acetylmethionine. Thr-3 bears the Phosphothreonine mark. A Protein kinase domain is found at 30–281; the sequence is FDVLEKLGEG…ATQLLQHPFV (252 aa). ATP-binding positions include 36 to 44 and Lys-59; that span reads LGEGSYGSV. The Proton acceptor role is filled by Asp-149. Thr-183 is modified (phosphothreonine; by autocatalysis). Ser-265 bears the Phosphoserine mark. Positions 290–310 form a coiled coil; it reads LRDLINEAMDVKLKRQESQQR. The segment covering 303 to 312 has biased composition (basic and acidic residues); sequence KRQESQQREV. The tract at residues 303 to 332 is disordered; that stretch reads KRQESQQREVDQDDEENSEEDEMDSGTMVR. Positions 313–326 are enriched in acidic residues; it reads DQDDEENSEEDEMD. Ser-320 bears the Phosphoserine mark. 2 positions are modified to phosphothreonine: Thr-340 and Thr-367. A Phosphothreonine; by PKB/AKT1 modification is found at Thr-387. 2 positions are modified to phosphoserine: Ser-410 and Ser-414. Residue Tyr-433 is modified to Phosphotyrosine. Residues 433-480 enclose the SARAH domain; that stretch reads YEFLKSWTVEDLQKRLLALDPMMEQEIEEIRQKYQSKRQPILDAIEAK.

It belongs to the protein kinase superfamily. STE Ser/Thr protein kinase family. STE20 subfamily. As to quaternary structure, homodimer; mediated via the coiled-coil region. Interacts with NORE1, which inhibits autoactivation. Interacts with and stabilizes SAV1. Interacts with RASSF1. Interacts with FOXO3. Interacts with RASSF2 (via SARAH domain). Interacts with AR, PKB/AKT1, TNNI3 and SIRT1. Interacts with DLG5 (via PDZ domain 3). Interacts with MARK3 and SCRIB in the presence of DLG5. Mg(2+) serves as cofactor. Post-translationally, autophosphorylated on serine and threonine residues. Phosphorylation at Thr-387 by PKB/AKT1, leads to inhibition of its: kinase activity, nuclear translocation and autophosphorylation at Thr-183. It also diminishes its cleavage by caspases and its ability to phosphorylate FOXO3. In terms of processing, proteolytically cleaved by caspase-3 during apoptosis at Asp-326 and Asp-349 resulting in a 37 kDa or a 39 kDa subunit respectively. The 39 kDa subunit is further cleaved into the 37 kDa form. Proteolytic cleavage results in kinase activation and nuclear translocation of the truncated form (MST1/N). It is less likely that cleavage at Asp-349 is a prerequisite for activation as this site is not conserved in the murine ortholog.

The protein localises to the cytoplasm. It localises to the nucleus. It carries out the reaction L-seryl-[protein] + ATP = O-phospho-L-seryl-[protein] + ADP + H(+). The enzyme catalyses L-threonyl-[protein] + ATP = O-phospho-L-threonyl-[protein] + ADP + H(+). With respect to regulation, inhibited by the C-terminal non-catalytic region. Activated by caspase-cleavage. Full activation also requires homodimerization and autophosphorylation of Thr-183. Activated by RASSF1 which acts by preventing its dephosphorylation. In terms of biological role, stress-activated, pro-apoptotic kinase which, following caspase-cleavage, enters the nucleus and induces chromatin condensation followed by internucleosomal DNA fragmentation. Key component of the Hippo signaling pathway which plays a pivotal role in organ size control and tumor suppression by restricting proliferation and promoting apoptosis. The core of this pathway is composed of a kinase cascade wherein STK3/MST2 and STK4/MST1, in complex with its regulatory protein SAV1, phosphorylates and activates LATS1/2 in complex with its regulatory protein MOB1, which in turn phosphorylates and inactivates YAP1 oncoprotein and WWTR1/TAZ. Phosphorylation of YAP1 by LATS2 inhibits its translocation into the nucleus to regulate cellular genes important for cell proliferation, cell death, and cell migration. STK3/MST2 and STK4/MST1 are required to repress proliferation of mature hepatocytes, to prevent activation of facultative adult liver stem cells (oval cells), and to inhibit tumor formation. Phosphorylates 'Ser-14' of histone H2B (H2BS14ph) during apoptosis. Phosphorylates FOXO3 upon oxidative stress, which results in its nuclear translocation and cell death initiation. Phosphorylates MOBKL1A, MOBKL1B and RASSF2. Phosphorylates TNNI3 (cardiac Tn-I) and alters its binding affinity to TNNC1 (cardiac Tn-C) and TNNT2 (cardiac Tn-T). Phosphorylates FOXO1 on 'Ser-212' and regulates its activation and stimulates transcription of PMAIP1 in a FOXO1-dependent manner. Phosphorylates SIRT1 and inhibits SIRT1-mediated p53/TP53 deacetylation, thereby promoting p53/TP53 dependent transcription and apoptosis upon DNA damage. Acts as an inhibitor of PKB/AKT1. Phosphorylates AR on 'Ser-650' and suppresses its activity by intersecting with PKB/AKT1 signaling and antagonizing formation of AR-chromatin complexes. The chain is Serine/threonine-protein kinase 4 (STK4) from Macaca mulatta (Rhesus macaque).